The chain runs to 572 residues: Sulfite reductase [NADPH] hemoprotein beta-component (572 aa).

Cysteine 437, cysteine 443, cysteine 482, and cysteine 486 together coordinate [4Fe-4S] cluster. Cysteine 486 contributes to the siroheme binding site.

Belongs to the nitrite and sulfite reductase 4Fe-4S domain family. Alpha(8)-beta(8). The alpha component is a flavoprotein, the beta component is a hemoprotein. Requires siroheme as cofactor. [4Fe-4S] cluster is required as a cofactor.

The catalysed reaction is hydrogen sulfide + 3 NADP(+) + 3 H2O = sulfite + 3 NADPH + 4 H(+). Its pathway is sulfur metabolism; hydrogen sulfide biosynthesis; hydrogen sulfide from sulfite (NADPH route): step 1/1. Functionally, component of the sulfite reductase complex that catalyzes the 6-electron reduction of sulfite to sulfide. This is one of several activities required for the biosynthesis of L-cysteine from sulfate. The sequence is that of Sulfite reductase [NADPH] hemoprotein beta-component from Staphylococcus epidermidis (strain ATCC 12228 / FDA PCI 1200).